The primary structure comprises 397 residues: Tryptophan synthase beta chain (397 aa).

Lysine 91 is subject to N6-(pyridoxal phosphate)lysine.

Belongs to the TrpB family. In terms of assembly, tetramer of two alpha and two beta chains. Pyridoxal 5'-phosphate serves as cofactor.

It catalyses the reaction (1S,2R)-1-C-(indol-3-yl)glycerol 3-phosphate + L-serine = D-glyceraldehyde 3-phosphate + L-tryptophan + H2O. It participates in amino-acid biosynthesis; L-tryptophan biosynthesis; L-tryptophan from chorismate: step 5/5. Its function is as follows. The beta subunit is responsible for the synthesis of L-tryptophan from indole and L-serine. The polypeptide is Tryptophan synthase beta chain (Bacillus anthracis (strain A0248)).